Here is an 826-residue protein sequence, read N- to C-terminus: Hyaluronate lyase HylA (826 aa).

A signal peptide (tat-type signal) is located at residues methionine 1 to alanine 36. Active-site residues include histidine 276, tyrosine 285, and arginine 339. The tract at residues leucine 800 to serine 826 is disordered.

Belongs to the polysaccharide lyase 8 family. Predicted to be exported by the Tat system. The position of the signal peptide cleavage has not been experimentally proven.

It localises to the secreted. It carries out the reaction [hyaluronan](n) = n 3-(4-deoxy-beta-D-gluc-4-enuronosyl)-N-acetyl-D-glucosamine + H2O. Degrades hyaluronic acid (HA) into large-sized HA oligosaccharides, including tetrasaccharide HA (HA-4), hexasaccharide HA (HA-6) and higher molecular weight HA, and to a lesser extent into HA disaccharides (HA-2). Involved in the pathogenesis of acne. HA degradation products induce secretion of proinflammatory cytokines (IL-6, IL-8 and TNF-alpha) from human HaCaT keratinocyte cell line and from mouse bone marrow derived macrophages (BMDMs). Produced HA fragments also direct robust TLR2-dependent inflammation in the mouse model of acne. This chain is Hyaluronate lyase HylA, found in Cutibacterium acnes (Propionibacterium acnes).